The sequence spans 693 residues: Polyribonucleotide nucleotidyltransferase (693 aa).

The Mg(2+) site is built by Asp-486 and Asp-492. Residues 553 to 612 (PRFTTLKIHPDKIRDVIGKGGATIRALTEETGTSIDISDDGTVKIASVDKAAGDEARRRI) enclose the KH domain. One can recognise an S1 motif domain in the interval 622–690 (GRIYEGRVVK…KQGRIRLSMK (69 aa)).

This sequence belongs to the polyribonucleotide nucleotidyltransferase family. In terms of assembly, component of the RNA degradosome, which is a multiprotein complex involved in RNA processing and mRNA degradation. The cofactor is Mg(2+).

It is found in the cytoplasm. The catalysed reaction is RNA(n+1) + phosphate = RNA(n) + a ribonucleoside 5'-diphosphate. Functionally, involved in mRNA degradation. Catalyzes the phosphorolysis of single-stranded polyribonucleotides processively in the 3'- to 5'-direction. In Thioalkalivibrio sulfidiphilus (strain HL-EbGR7), this protein is Polyribonucleotide nucleotidyltransferase.